A 90-amino-acid polypeptide reads, in one-letter code: UPF0237 protein NMB1653 (90 aa).

The 79-residue stretch at 5–83 (VITVIGKDRV…LDIRMQNEEI (79 aa)) folds into the ACT domain.

Belongs to the UPF0237 family.

This chain is UPF0237 protein NMB1653, found in Neisseria meningitidis serogroup B (strain ATCC BAA-335 / MC58).